Reading from the N-terminus, the 219-residue chain is Small ribosomal subunit protein uS5 (219 aa).

The region spanning 52–115 is the S5 DRBM domain; it reads LDDEVLDINM…DVAKLNLISV (64 aa). The disordered stretch occupies residues 196–219; it reads LRNASQSRTPRRAAAKQREQEVSE.

The protein belongs to the universal ribosomal protein uS5 family. Part of the 30S ribosomal subunit. Contacts protein S4.

With S4 and S12 plays an important role in translational accuracy. This chain is Small ribosomal subunit protein uS5, found in Haloquadratum walsbyi (strain DSM 16790 / HBSQ001).